The primary structure comprises 141 residues: MDPLTINFSRIETFGLFVGNEPPPVVSSLFFLLNILFGSLEWVLALVFTLLLFSFFLFLDLMVSVFKLIGLGSPCNFRKRPHALQRTVPCSSLLHRGVLTVKQFWHVGWSSPSQSSTPAAAESVGEGSFNESLSTILLYII.

This is an uncharacterized protein from Saccharomyces cerevisiae (strain ATCC 204508 / S288c) (Baker's yeast).